A 657-amino-acid polypeptide reads, in one-letter code: Katanin p80 WD40 repeat-containing subunit B1 (657 aa).

WD repeat units follow at residues 18–58 (AHSS…CVMS), 61–100 (GHTTPIESLQISAKEELIVAGSQSGSIRVWDLEAAKILRT), 103–142 (GHKANICSLDFHPYGSFVASGSLDTDIKLWDVRRKGCIFK), 145–184 (SHTQAVRCLRFSPDGKWLASAADDHTVKLWDLTAGKVMFE), 187–226 (GHSGPVNVVEFHPSEYLLASGSSDRTIRFWDLEKFHVVSC), and 229–269 (EEAT…DVVV). Disordered regions lie at residues 318–410 (NNEL…EDEP) and 423–454 (VEVQTPLPKQELPETFQRPPIASSTPMPRAEP). Over residues 325–345 (PTPTGSSLRRSYDRPSTSCSK) the composition is skewed to polar residues. Positions 351–385 (HSSESERRSPSSEEDRDEKESKAEIQNPEDYKEIF) are enriched in basic and acidic residues.

Belongs to the WD repeat KATNB1 family. In terms of assembly, interacts with KATNA1. This interaction enhances the microtubule binding and severing activity of KATNA1 and also targets this activity to the centrosome.

It localises to the cytoplasm. The protein resides in the cytoskeleton. Its subcellular location is the microtubule organizing center. It is found in the centrosome. The protein localises to the spindle pole. It localises to the spindle. In terms of biological role, participates in a complex which severs microtubules in an ATP-dependent manner. May act to target the enzymatic subunit of this complex to sites of action such as the centrosome. Microtubule severing may promote rapid reorganization of cellular microtubule arrays and the release of microtubules from the centrosome following nucleation. The sequence is that of Katanin p80 WD40 repeat-containing subunit B1 from Gallus gallus (Chicken).